The sequence spans 267 residues: Acryloyl-CoA reductase electron transfer subunit gamma (267 aa).

In terms of assembly, heterohexadecamer; tetramer of tetramers. Each tetramer is composed of 2 alpha (AcrC), a beta (AcrA) and a gamma (AcrB) subunit.

It localises to the cytoplasm. Its function is as follows. Part of the ETF-acryloyl-CoA reductase complex involved in the pathway of L-alanine fermentation. The electron transfer flavoprotein (ETF) serves as a specific electron acceptor for acryloyl-CoA reductase. The polypeptide is Acryloyl-CoA reductase electron transfer subunit gamma (acrB) (Anaerotignum propionicum (Clostridium propionicum)).